A 388-amino-acid chain; its full sequence is Chorismate synthase (388 aa).

2 residues coordinate NADP(+): arginine 39 and arginine 45. FMN is bound by residues 130-132, 251-252, glycine 296, 311-315, and arginine 337; these read RSS, NA, and KPIPT.

It belongs to the chorismate synthase family. Homotetramer. It depends on FMNH2 as a cofactor.

It carries out the reaction 5-O-(1-carboxyvinyl)-3-phosphoshikimate = chorismate + phosphate. Its pathway is metabolic intermediate biosynthesis; chorismate biosynthesis; chorismate from D-erythrose 4-phosphate and phosphoenolpyruvate: step 7/7. Its function is as follows. Catalyzes the anti-1,4-elimination of the C-3 phosphate and the C-6 proR hydrogen from 5-enolpyruvylshikimate-3-phosphate (EPSP) to yield chorismate, which is the branch point compound that serves as the starting substrate for the three terminal pathways of aromatic amino acid biosynthesis. This reaction introduces a second double bond into the aromatic ring system. The protein is Chorismate synthase of Streptococcus pneumoniae (strain 70585).